The following is a 108-amino-acid chain: Placenta-specific protein 9 (108 aa).

An N-terminal signal peptide occupies residues 1 to 19; the sequence is MQALLCALAGLALLRAGTG. Disordered stretches follow at residues 18–49 and 89–108; these read TGEW…SPGC and SNLP…DDGF. Residues 54–91 are a coiled coil; that stretch reads AVQRRLDIMEETVEKTVEHLEAEVTGLLGLLEELASNL.

This sequence belongs to the PLAC9 family. Highly expressed in placenta, and weakly in ovary, testis, and lung.

The protein localises to the secreted. The chain is Placenta-specific protein 9 (Plac9) from Mus musculus (Mouse).